The following is a 409-amino-acid chain: Tryptophan synthase beta chain (409 aa).

Lys-86 carries the post-translational modification N6-(pyridoxal phosphate)lysine.

This sequence belongs to the TrpB family. In terms of assembly, tetramer of two alpha and two beta chains. Requires pyridoxal 5'-phosphate as cofactor.

The enzyme catalyses (1S,2R)-1-C-(indol-3-yl)glycerol 3-phosphate + L-serine = D-glyceraldehyde 3-phosphate + L-tryptophan + H2O. It participates in amino-acid biosynthesis; L-tryptophan biosynthesis; L-tryptophan from chorismate: step 5/5. In terms of biological role, the beta subunit is responsible for the synthesis of L-tryptophan from indole and L-serine. The protein is Tryptophan synthase beta chain of Shewanella pealeana (strain ATCC 700345 / ANG-SQ1).